Reading from the N-terminus, the 365-residue chain is UDP-N-acetylglucosamine--N-acetylmuramyl-(pentapeptide) pyrophosphoryl-undecaprenol N-acetylglucosamine transferase (365 aa).

UDP-N-acetyl-alpha-D-glucosamine-binding positions include 19-21 (TGG), asparagine 131, arginine 170, serine 201, isoleucine 255, 274-279 (ALTVTE), and glutamine 300.

It belongs to the glycosyltransferase 28 family. MurG subfamily.

It is found in the cell inner membrane. The catalysed reaction is di-trans,octa-cis-undecaprenyl diphospho-N-acetyl-alpha-D-muramoyl-L-alanyl-D-glutamyl-meso-2,6-diaminopimeloyl-D-alanyl-D-alanine + UDP-N-acetyl-alpha-D-glucosamine = di-trans,octa-cis-undecaprenyl diphospho-[N-acetyl-alpha-D-glucosaminyl-(1-&gt;4)]-N-acetyl-alpha-D-muramoyl-L-alanyl-D-glutamyl-meso-2,6-diaminopimeloyl-D-alanyl-D-alanine + UDP + H(+). It functions in the pathway cell wall biogenesis; peptidoglycan biosynthesis. In terms of biological role, cell wall formation. Catalyzes the transfer of a GlcNAc subunit on undecaprenyl-pyrophosphoryl-MurNAc-pentapeptide (lipid intermediate I) to form undecaprenyl-pyrophosphoryl-MurNAc-(pentapeptide)GlcNAc (lipid intermediate II). This chain is UDP-N-acetylglucosamine--N-acetylmuramyl-(pentapeptide) pyrophosphoryl-undecaprenol N-acetylglucosamine transferase, found in Acinetobacter baumannii (strain SDF).